The primary structure comprises 141 residues: Large ribosomal subunit protein uL11 (141 aa).

This sequence belongs to the universal ribosomal protein uL11 family. As to quaternary structure, part of the ribosomal stalk of the 50S ribosomal subunit. Interacts with L10 and the large rRNA to form the base of the stalk. L10 forms an elongated spine to which L12 dimers bind in a sequential fashion forming a multimeric L10(L12)X complex. Post-translationally, one or more lysine residues are methylated.

Its function is as follows. Forms part of the ribosomal stalk which helps the ribosome interact with GTP-bound translation factors. This chain is Large ribosomal subunit protein uL11, found in Streptococcus pyogenes serotype M1.